Consider the following 552-residue polypeptide: FACT complex subunit POB3 (552 aa).

A compositionally biased stretch (basic and acidic residues) spans 190–205 (KKEESSNEVVPKKEDG). 2 disordered regions span residues 190-209 (KKEESSNEVVPKKEDGAEGE) and 484-552 (QTAL…PKVE). Over residues 490–529 (DSDEEDINMGSAGEDDESVDEDFQVSSDNDADEVAEEFDS) the composition is skewed to acidic residues. Positions 541–552 (DEERPSKKPKVE) are enriched in basic and acidic residues.

Belongs to the SSRP1 family. Forms a stable heterodimer with SPT16. The SPT16-POB3 dimer weakly associates with multiple molecules of NHP6 (NHP6A or NHP6B) to form the FACT (yFACT or SNP) complex. The FACT complex interacts with the CK2 (casein kinase II) complex subunits CKA1, CKA2, CKB1 and CKB2 and the components of the transcription machinery CHD1, CTR9, PAF1 and CDC73. The FACT complex interacts with the PAF1 complex. SPT16 interacts with SAS3 and POL1. Interacts directly with RFA1.

Its subcellular location is the nucleus. The protein localises to the chromosome. Functionally, component of the FACT complex, a general chromatin factor that acts to reorganize nucleosomes. The FACT complex is involved in multiple processes that require DNA as a template such as mRNA elongation, DNA replication and DNA repair. During transcription elongation the FACT complex acts as a histone chaperone that both destabilizes and restores nucleosomal structure. It facilitates the passage of RNA polymerase II and transcription by promoting the dissociation of one histone H2A-H2B dimer from the nucleosome, then subsequently promotes the reestablishment of the nucleosome following the passage of RNA polymerase II. Transcription elongation is promoted by the repression of transcription initiation from cryptic sites. Also acts in establishing transcription initiation complexes and promotes SPT15/TBP-binding to a TATA box. Together with replication factor-A protein (RPA), FACT may play a role in nucleosome deposition during DNA replication. The polypeptide is FACT complex subunit POB3 (POB3) (Saccharomyces cerevisiae (strain ATCC 204508 / S288c) (Baker's yeast)).